Here is a 36-residue protein sequence, read N- to C-terminus: U14-ctenitoxin-Co1b (36 aa).

In terms of tissue distribution, expressed by the venom gland.

The protein resides in the secreted. Its function is as follows. Not toxic to mice by intracerebroventricular injection. This Ctenus ornatus (Brazilian spider) protein is U14-ctenitoxin-Co1b.